We begin with the raw amino-acid sequence, 244 residues long: Ribonuclease PH (244 aa).

Residues Arg-90 and 128–130 each bind phosphate; that span reads GTR.

It belongs to the RNase PH family. As to quaternary structure, homohexameric ring arranged as a trimer of dimers.

The catalysed reaction is tRNA(n+1) + phosphate = tRNA(n) + a ribonucleoside 5'-diphosphate. Functionally, phosphorolytic 3'-5' exoribonuclease that plays an important role in tRNA 3'-end maturation. Removes nucleotide residues following the 3'-CCA terminus of tRNAs; can also add nucleotides to the ends of RNA molecules by using nucleoside diphosphates as substrates, but this may not be physiologically important. Probably plays a role in initiation of 16S rRNA degradation (leading to ribosome degradation) during starvation. This chain is Ribonuclease PH, found in Prochlorococcus marinus (strain MIT 9313).